We begin with the raw amino-acid sequence, 367 residues long: Apolipoprotein A-V (367 aa).

An N-terminal signal peptide occupies residues 1-20 (MVAVLTWALALLSAFATVQT). At serine 56 the chain carries Phosphoserine. Residues 71–90 (LGPLSGQGREPPGLPHDPEG) are disordered.

Belongs to the apolipoprotein A1/A4/E family. In terms of assembly, interacts with GPIHBP1. Interacts with SORL1; this interaction leads to APOA5 internalization and sorting either to lysosomes and degradation, or to the trans-Golgi network. Phosphorylated by FAM20C in the extracellular medium.

Its subcellular location is the secreted. It is found in the early endosome. It localises to the late endosome. The protein localises to the golgi apparatus. The protein resides in the trans-Golgi network. In terms of biological role, minor apolipoprotein mainly associated with HDL and to a lesser extent with VLDL. May also be associated with chylomicrons. Important determinant of plasma triglyceride (TG) levels by both being a potent stimulator of apo-CII lipoprotein lipase (LPL) TG hydrolysis and an inhibitor of the hepatic VLDL-TG production rate (without affecting the VLDL-apoB production rate). Activates poorly lecithin:cholesterol acyltransferase (LCAT) and does not enhance efflux of cholesterol from macrophages. Binds heparin. This is Apolipoprotein A-V (APOA5) from Neomonachus schauinslandi (Hawaiian monk seal).